The chain runs to 335 residues: Biotin synthase (335 aa).

The Radical SAM core domain maps to 46-274 (YNIQLASLFS…KSKIRLSAGR (229 aa)). Positions 61, 65, and 68 each coordinate [4Fe-4S] cluster. Residues Cys-105, Cys-137, Cys-197, and Arg-269 each contribute to the [2Fe-2S] cluster site.

This sequence belongs to the radical SAM superfamily. Biotin synthase family. In terms of assembly, homodimer. [4Fe-4S] cluster is required as a cofactor. The cofactor is [2Fe-2S] cluster.

The catalysed reaction is (4R,5S)-dethiobiotin + (sulfur carrier)-SH + 2 reduced [2Fe-2S]-[ferredoxin] + 2 S-adenosyl-L-methionine = (sulfur carrier)-H + biotin + 2 5'-deoxyadenosine + 2 L-methionine + 2 oxidized [2Fe-2S]-[ferredoxin]. The protein operates within cofactor biosynthesis; biotin biosynthesis; biotin from 7,8-diaminononanoate: step 2/2. Functionally, catalyzes the conversion of dethiobiotin (DTB) to biotin by the insertion of a sulfur atom into dethiobiotin via a radical-based mechanism. This is Biotin synthase from Prochlorococcus marinus (strain AS9601).